We begin with the raw amino-acid sequence, 784 residues long: Probable phosphoketolase (784 aa).

The protein belongs to the XFP family. Requires thiamine diphosphate as cofactor.

In Rhodopseudomonas palustris (strain BisB5), this protein is Probable phosphoketolase.